A 511-amino-acid polypeptide reads, in one-letter code: Sodium/proline symporter (511 aa).

13 helical membrane passes run 16–36 (WQTY…AFTY), 53–73 (IGPY…WMIM), 84–104 (LSAM…YFVV), 138–158 (IISG…GFVS), 173–193 (FGLI…GYLA), 199–219 (FFQG…AMMN), 239–259 (LFKG…LGYF), 285–305 (ISWM…GIAF), 326–346 (VLFH…AIMS), 380–400 (FVMI…AIAW), 409–429 (LVGN…LFAL), 437–457 (AGAV…IAWI), and 466–486 (IFGL…TYVV).

It belongs to the sodium:solute symporter (SSF) (TC 2.A.21) family.

It is found in the cell membrane. The enzyme catalyses L-proline(in) + Na(+)(in) = L-proline(out) + Na(+)(out). Functionally, catalyzes the sodium-dependent uptake of extracellular L-proline. Since most S.aureus strains are L-proline auxotrophs, this transporter may aid the bacterial persistence during an infection of tissues with low proline concentrations. The sequence is that of Sodium/proline symporter from Staphylococcus aureus.